A 271-amino-acid chain; its full sequence is Acyl-[acyl-carrier-protein]--UDP-N-acetylglucosamine O-acyltransferase (271 aa).

It belongs to the transferase hexapeptide repeat family. LpxA subfamily. In terms of assembly, homotrimer.

It localises to the cytoplasm. It catalyses the reaction a (3R)-hydroxyacyl-[ACP] + UDP-N-acetyl-alpha-D-glucosamine = a UDP-3-O-[(3R)-3-hydroxyacyl]-N-acetyl-alpha-D-glucosamine + holo-[ACP]. Its pathway is glycolipid biosynthesis; lipid IV(A) biosynthesis; lipid IV(A) from (3R)-3-hydroxytetradecanoyl-[acyl-carrier-protein] and UDP-N-acetyl-alpha-D-glucosamine: step 1/6. Its function is as follows. Involved in the biosynthesis of lipid A, a phosphorylated glycolipid that anchors the lipopolysaccharide to the outer membrane of the cell. The chain is Acyl-[acyl-carrier-protein]--UDP-N-acetylglucosamine O-acyltransferase from Rhizobium rhizogenes (strain K84 / ATCC BAA-868) (Agrobacterium radiobacter).